Consider the following 400-residue polypeptide: Bifunctional enzyme IspD/IspF (400 aa).

Residues 1 to 235 form a 2-C-methyl-D-erythritol 4-phosphate cytidylyltransferase region; that stretch reads MSLWTVLLAA…LAEAAAPPVP (235 aa). The tract at residues 236–400 is 2-C-methyl-D-erythritol 2,4-cyclodiphosphate synthase; the sequence is VTGYGYDVHR…VALVSGWRRP (165 aa). D242 and H244 together coordinate a divalent metal cation. Residues 242–244 and 276–277 contribute to the 4-CDP-2-C-methyl-D-erythritol 2-phosphate site; these read DVH and HS. H284 is an a divalent metal cation binding site. 4-CDP-2-C-methyl-D-erythritol 2-phosphate is bound by residues 298–300, 303–307, 374–377, and F381; these read DIG, FPDSN, and TTEE.

The protein in the N-terminal section; belongs to the IspD/TarI cytidylyltransferase family. IspD subfamily. This sequence in the C-terminal section; belongs to the IspF family. It depends on a divalent metal cation as a cofactor.

The enzyme catalyses 2-C-methyl-D-erythritol 4-phosphate + CTP + H(+) = 4-CDP-2-C-methyl-D-erythritol + diphosphate. It catalyses the reaction 4-CDP-2-C-methyl-D-erythritol 2-phosphate = 2-C-methyl-D-erythritol 2,4-cyclic diphosphate + CMP. Its pathway is isoprenoid biosynthesis; isopentenyl diphosphate biosynthesis via DXP pathway; isopentenyl diphosphate from 1-deoxy-D-xylulose 5-phosphate: step 2/6. It participates in isoprenoid biosynthesis; isopentenyl diphosphate biosynthesis via DXP pathway; isopentenyl diphosphate from 1-deoxy-D-xylulose 5-phosphate: step 4/6. Functionally, bifunctional enzyme that catalyzes the formation of 4-diphosphocytidyl-2-C-methyl-D-erythritol from CTP and 2-C-methyl-D-erythritol 4-phosphate (MEP) (IspD), and catalyzes the conversion of 4-diphosphocytidyl-2-C-methyl-D-erythritol 2-phosphate (CDP-ME2P) to 2-C-methyl-D-erythritol 2,4-cyclodiphosphate (ME-CPP) with a corresponding release of cytidine 5-monophosphate (CMP) (IspF). This chain is Bifunctional enzyme IspD/IspF, found in Solidesulfovibrio magneticus (strain ATCC 700980 / DSM 13731 / RS-1) (Desulfovibrio magneticus).